The primary structure comprises 117 residues: NADH-ubiquinone oxidoreductase chain 3 (117 aa).

Helical transmembrane passes span 1-21 (MLMLSIMATIIFIITIVVMML), 57-77 (FFLIAIIFLIFDVEIALLLPM), and 86-106 (LMNWTMTSFFFIFILLIGLYH).

It belongs to the complex I subunit 3 family.

The protein localises to the mitochondrion membrane. It carries out the reaction a ubiquinone + NADH + 5 H(+)(in) = a ubiquinol + NAD(+) + 4 H(+)(out). Core subunit of the mitochondrial membrane respiratory chain NADH dehydrogenase (Complex I) that is believed to belong to the minimal assembly required for catalysis. Complex I functions in the transfer of electrons from NADH to the respiratory chain. The immediate electron acceptor for the enzyme is believed to be ubiquinone. The protein is NADH-ubiquinone oxidoreductase chain 3 (ND3) of Anopheles quadrimaculatus (Common malaria mosquito).